The chain runs to 149 residues: Transcriptional repressor NrdR (149 aa).

Residues 3–34 fold into a zinc finger; the sequence is CPFCFAVDTKVIDSRLVGEGSSVRRRRQCLVC. The ATP-cone domain maps to 49–139; it reads PRVVKSNDVR…VYRSFEDIKE (91 aa).

The protein belongs to the NrdR family. Zn(2+) is required as a cofactor.

In terms of biological role, negatively regulates transcription of bacterial ribonucleotide reductase nrd genes and operons by binding to NrdR-boxes. This Shigella flexneri protein is Transcriptional repressor NrdR.